The chain runs to 127 residues: Two-component response regulator ORR41 (127 aa).

Residues 7-125 form the Response regulatory domain; it reads RVLLVEDEEI…KLGVILAKFR (119 aa). Aspartate 60 is modified (4-aspartylphosphate).

This sequence belongs to the ARR family. Type-C subfamily. In terms of processing, two-component system major event consists of a His-to-Asp phosphorelay between a sensor histidine kinase (HK) and a response regulator (RR). In plants, the His-to-Asp phosphorelay involves an additional intermediate named Histidine-containing phosphotransfer protein (HPt). This multistep phosphorelay consists of a His-Asp-His-Asp sequential transfer of a phosphate group between first a His and an Asp of the HK protein, followed by the transfer to a conserved His of the HPt protein and finally the transfer to an Asp in the receiver domain of the RR protein.

Its function is as follows. Functions as a response regulator involved in His-to-Asp phosphorelay signal transduction system. Phosphorylation of the Asp residue in the receiver domain activates the ability of the protein to promote the transcription of target genes. May directly activate some type-A response regulators in response to cytokinins. The protein is Two-component response regulator ORR41 of Oryza sativa subsp. japonica (Rice).